A 608-amino-acid chain; its full sequence is Chaperone protein HtpG (608 aa).

An a; substrate-binding region spans residues 1–332; the sequence is MQFQTEVNQL…VEDLPLNVSR (332 aa). Residues 333-536 form a b region; it reads EILQENQILK…KNKPDFAMQQ (204 aa). The tract at residues 537–608 is c; that stretch reads LLKQMGQEQN…LTKIINKAFS (72 aa).

This sequence belongs to the heat shock protein 90 family. In terms of assembly, homodimer.

The protein localises to the cytoplasm. Its function is as follows. Molecular chaperone. Has ATPase activity. The chain is Chaperone protein HtpG from Campylobacter jejuni subsp. jejuni serotype O:6 (strain 81116 / NCTC 11828).